The primary structure comprises 733 residues: ATP-dependent RNA helicase DBP7 (733 aa).

Disordered regions lie at residues 1–92 (MDED…SKMI) and 119–139 (SSQL…SNAP). Polar residues predominate over residues 17 to 30 (SVSSGSNKRTTSKV). Residues 52–80 (QKKDRSATGKDDGKKHENDESNDSKKRPT) are compositionally biased toward basic and acidic residues. A Q motif motif is present at residues 144-173 (STFEGLGINERLSKHLTETLRFKNPTKVQK). The region spanning 177-372 (PTMLSTERDL…SIILNNPEMI (196 aa)) is the Helicase ATP-binding domain. 190–197 (AQTGSGKT) lines the ATP pocket. The DEAD box signature appears at 304–307 (DEGD). Positions 406–596 (TLSAILKKIS…NYENYLKDGF (191 aa)) constitute a Helicase C-terminal domain. The tract at residues 687–714 (KKLGKSVESNSGIQGASKKTKKEDPRKK) is disordered.

This sequence belongs to the DEAD box helicase family. DDX31/DBP7 subfamily.

The protein localises to the nucleus. Its subcellular location is the nucleolus. The catalysed reaction is ATP + H2O = ADP + phosphate + H(+). Its function is as follows. ATP-binding RNA helicase involved in the biogenesis of 60S ribosomal subunits and is required for the normal formation of 25S and 5.8S rRNAs. This chain is ATP-dependent RNA helicase DBP7 (DPB7), found in Scheffersomyces stipitis (strain ATCC 58785 / CBS 6054 / NBRC 10063 / NRRL Y-11545) (Yeast).